The primary structure comprises 372 residues: Delta-type opioid receptor (372 aa).

Residues 1 to 47 lie on the Extracellular side of the membrane; it reads MEPAPSAGAELQPPLFANASDAYPSACPSAGANASGPPGARSASSLA. N-linked (GlcNAc...) asparagine glycans are attached at residues N18 and N33. A helical membrane pass occupies residues 48–75; sequence LAIAITALYSAVCAVGLLGNVLVMFGIV. Over 76-85 the chain is Cytoplasmic; the sequence is RYTKMKTATN. A helical membrane pass occupies residues 86 to 110; it reads IYIFNLALADALATSTLPFQSAKYL. At 111–122 the chain is on the extracellular side; the sequence is METWPFGELLCK. A disulfide bridge links C121 with C198. A helical transmembrane segment spans residues 123 to 144; sequence AVLSIDYYNMFTSIFTLTMMSV. Over 145–163 the chain is Cytoplasmic; it reads DRYIAVCHPVKALDFRTPA. Residues 164–186 form a helical membrane-spanning segment; that stretch reads KAKLINICIWVLASGVGVPIMVM. The Extracellular portion of the chain corresponds to 187 to 206; sequence AVTRPRDGAVVCMLQFPSPS. The helical transmembrane segment at 207–238 threads the bilayer; it reads WYWDTVTKICVFLFAFVVPILIITVCYGLMLL. Topologically, residues 239–261 are cytoplasmic; sequence RLRSVRLLSGSKEKDRSLRRITR. Residues 262-284 form a helical membrane-spanning segment; it reads MVLVVVGAFVVCWAPIHIFVIVW. At 285–299 the chain is on the extracellular side; that stretch reads TLVDIDRRDPLVVAA. A helical membrane pass occupies residues 300 to 321; sequence LHLCIALGYANSSLNPVLYAFL. Topologically, residues 322 to 372 are cytoplasmic; the sequence is DENFKRCFRQLCRKPCGRPDPSSFSRAREATARERVTACTPSDGPGGGAAA. C333 carries S-palmitoyl cysteine lipidation. The segment at 340-372 is disordered; sequence PDPSSFSRAREATARERVTACTPSDGPGGGAAA. The segment covering 347 to 357 has biased composition (basic and acidic residues); the sequence is RAREATARERV.

This sequence belongs to the G-protein coupled receptor 1 family. As to quaternary structure, may form homooligomers. Forms a heterodimer with OPRM1. Interacts with GPRASP1. Interacts with RTP4; the interaction promotes cell surface localization of the OPRD1-OPRM1 heterodimer. In terms of processing, N-glycosylated. Post-translationally, ubiquitinated. A basal ubiquitination seems not to be related to degradation. Ubiquitination is increased upon formation of OPRM1:OPRD1 oligomers leading to proteasomal degradation; the ubiquitination is diminished by RTP4. Detected in oocytes (at protein level). Detected in brain cortex, hypothalamus, hippocampus and olfactory bulb. Detected in oocytes.

It is found in the cell membrane. In terms of biological role, G-protein coupled receptor that functions as a receptor for endogenous enkephalins and for a subset of other opioids. Ligand binding causes a conformation change that triggers signaling via guanine nucleotide-binding proteins (G proteins) and modulates the activity of down-stream effectors, such as adenylate cyclase. Signaling leads to the inhibition of adenylate cyclase activity. Inhibits neurotransmitter release by reducing calcium ion currents and increasing potassium ion conductance. Plays a role in the perception of pain and in opiate-mediated analgesia. Plays a role in developing analgesic tolerance to morphine. The polypeptide is Delta-type opioid receptor (OPRD1) (Homo sapiens (Human)).